The chain runs to 673 residues: DNA ligase (673 aa).

NAD(+) contacts are provided by residues 33–37 (DYEYD), 82–83 (SL), and Glu113. The active-site N6-AMP-lysine intermediate is Lys115. Positions 136, 170, 285, and 309 each coordinate NAD(+). Zn(2+) contacts are provided by Cys403, Cys406, Cys421, and Cys426. The 90-residue stretch at 583–672 (AKSDILKGYT…SHEEVEKILM (90 aa)) folds into the BRCT domain.

This sequence belongs to the NAD-dependent DNA ligase family. LigA subfamily. Mg(2+) serves as cofactor. It depends on Mn(2+) as a cofactor.

It catalyses the reaction NAD(+) + (deoxyribonucleotide)n-3'-hydroxyl + 5'-phospho-(deoxyribonucleotide)m = (deoxyribonucleotide)n+m + AMP + beta-nicotinamide D-nucleotide.. In terms of biological role, DNA ligase that catalyzes the formation of phosphodiester linkages between 5'-phosphoryl and 3'-hydroxyl groups in double-stranded DNA using NAD as a coenzyme and as the energy source for the reaction. It is essential for DNA replication and repair of damaged DNA. This Caldicellulosiruptor saccharolyticus (strain ATCC 43494 / DSM 8903 / Tp8T 6331) protein is DNA ligase.